Here is a 161-residue protein sequence, read N- to C-terminus: uncharacterized protein (161 aa).

This is an uncharacterized protein from Escherichia coli (strain K12).